Reading from the N-terminus, the 245-residue chain is Eukaryotic translation initiation factor 6 (245 aa).

Tyrosine 113 carries the post-translational modification Phosphotyrosine. At threonine 165 the chain carries Phosphothreonine. At serine 166 the chain carries Phosphoserine. 2 positions are modified to phosphoserine; by CK1: serine 174 and serine 175. Phosphoserine; by PKC is present on serine 235. A phosphoserine mark is found at serine 239 and serine 243.

This sequence belongs to the eIF-6 family. In terms of assembly, monomer. Associates with the 60S ribosomal subunit. Interacts with RACK1. Interacts with DICER1, AGO2, TARBP2, MOV10 and RPL7A; they form a large RNA-induced silencing complex (RISC). Post-translationally, phosphorylation at Ser-174 and Ser-175 by CSNK1D/CK1 promotes nuclear export. Ufmylated by UFL1.

Its subcellular location is the cytoplasm. It is found in the nucleus. The protein localises to the nucleolus. In terms of biological role, binds to the 60S ribosomal subunit and prevents its association with the 40S ribosomal subunit to form the 80S initiation complex in the cytoplasm. Behaves as a stimulatory translation initiation factor downstream insulin/growth factors. Is also involved in ribosome biogenesis. Associates with pre-60S subunits in the nucleus and is involved in its nuclear export. Cytoplasmic release of TIF6 from 60S subunits and nuclear relocalization is promoted by a RACK1 (RACK1)-dependent protein kinase C activity. In tissues responsive to insulin, controls fatty acid synthesis and glycolysis by exerting translational control of adipogenic transcription factors such as CEBPB, CEBPD and ATF4 that have G/C rich or uORF in their 5'UTR. Required for ROS-dependent megakaryocyte maturation and platelets formation, controls the expression of mitochondrial respiratory chain genes involved in reactive oxygen species (ROS) synthesis. Involved in miRNA-mediated gene silencing by the RNA-induced silencing complex (RISC). Required for both miRNA-mediated translational repression and miRNA-mediated cleavage of complementary mRNAs by RISC. Modulates cell cycle progression and global translation of pre-B cells, its activation seems to be rate-limiting in tumorigenesis and tumor growth. This chain is Eukaryotic translation initiation factor 6, found in Bos taurus (Bovine).